Reading from the N-terminus, the 446-residue chain is MQIAILVTTVTLHFNQYECDSLADNQVMPCEPIIIERNITEIIYLTNTTIEKEICPKLMEYRNWSRPQCKITGFAPFSKDNSIRLSAGGDIWVTREPYVSCDPGKCYQFALGQGTTLDNKHSNDTIHDRIPHRTLLMNELGVPFHLGTRQVCIAWSSSSCHDGKAWLHVCVTGDDKNATASFIYDGRLVDSMGSWSQNILRTQESECVCINGTCTVVMTDGSASGRADTRILFIEEGKIVHISPLSGSAQHVEECSCYPRYPSVRCICRDNWKGSNRPIVDINIKDYSIDSRYVCSGLVGDTPRNNDRSSSSDCKNPNNDKGNHGVKGWAFDDGNDVWMGRTISKDSRSGYETFKVIDGWSTPNSKSQINRQVIVDRDNRSGYSGIFSVESKGCINRCFYVELIRGRKQETRVWWTSSSIVVFCGTSGTYGKGSWPDGANINFMPI.

The interval 13-65 (HFNQYECDSLADNQVMPCEPIIIERNITEIIYLTNTTIEKEICPKLMEYRNWS) is hypervariable stalk region. N-linked (GlcNAc...) asparagine; by host glycosylation is found at Asn-38, Asn-47, and Asn-63. Positions 68–446 (QCKITGFAPF…DGANINFMPI (379 aa)) are head of neuraminidase. 8 disulfides stabilise this stretch: Cys-69–Cys-394, Cys-101–Cys-106, Cys-160–Cys-207, Cys-209–Cys-214, Cys-255–Cys-268, Cys-257–Cys-266, Cys-295–Cys-314, and Cys-398–Cys-424. Position 95 (Arg-95) interacts with substrate. N-linked (GlcNAc...) asparagine; by host glycosylation is present at Asn-123. Asp-128 functions as the Proton donor/acceptor in the catalytic mechanism. Arg-129 serves as a coordination point for substrate. Asn-177 and Asn-211 each carry an N-linked (GlcNAc...) asparagine; by host glycan. 253-254 (EE) is a binding site for substrate. Arg-269 contacts substrate. The Ca(2+) site is built by Asp-270, Gly-274, and Asp-301. The interval 304–327 (RNNDRSSSSDCKNPNNDKGNHGVK) is disordered. A compositionally biased stretch (polar residues) spans 308–320 (RSSSSDCKNPNND). Arg-348 serves as a coordination point for substrate. N-linked (GlcNAc...) asparagine; by host glycosylation is present at Asn-379. Tyr-383 functions as the Nucleophile in the catalytic mechanism.

The protein belongs to the glycosyl hydrolase 34 family. Homotetramer. Ca(2+) is required as a cofactor. In terms of processing, N-glycosylated.

Its subcellular location is the virion membrane. The protein resides in the host apical cell membrane. It catalyses the reaction Hydrolysis of alpha-(2-&gt;3)-, alpha-(2-&gt;6)-, alpha-(2-&gt;8)- glycosidic linkages of terminal sialic acid residues in oligosaccharides, glycoproteins, glycolipids, colominic acid and synthetic substrates.. With respect to regulation, inhibited by the neuraminidase inhibitors zanamivir (Relenza) and oseltamivir (Tamiflu). These drugs interfere with the release of progeny virus from infected cells and are effective against all influenza strains. Resistance to neuraminidase inhibitors is quite rare. Functionally, catalyzes the removal of terminal sialic acid residues from viral and cellular glycoconjugates. Cleaves off the terminal sialic acids on the glycosylated HA during virus budding to facilitate virus release. Additionally helps virus spread through the circulation by further removing sialic acids from the cell surface. These cleavages prevent self-aggregation and ensure the efficient spread of the progeny virus from cell to cell. Otherwise, infection would be limited to one round of replication. Described as a receptor-destroying enzyme because it cleaves a terminal sialic acid from the cellular receptors. May facilitate viral invasion of the upper airways by cleaving the sialic acid moieties on the mucin of the airway epithelial cells. Likely to plays a role in the budding process through its association with lipid rafts during intracellular transport. May additionally display a raft-association independent effect on budding. Plays a role in the determination of host range restriction on replication and virulence. Sialidase activity in late endosome/lysosome traffic seems to enhance virus replication. The protein is Neuraminidase of Influenza A virus (strain A/Swine/Hong Kong/127/1982 H3N2).